We begin with the raw amino-acid sequence, 1466 residues long: Retrovirus-related Pol polyprotein from transposon RE1 (1466 aa).

Positions 227-270 (SHRNTTTTNNNNNGNRNNRYDNRNNNNNSKPWQQSSTNFHPNNN) are disordered. The span at 229–254 (RNTTTTNNNNNGNRNNRYDNRNNNNN) shows a compositional bias: low complexity. Over residues 255–270 (SKPWQQSSTNFHPNNN) the composition is skewed to polar residues. Residues 278 to 294 (KCQICGVQGHSAKRCSQ) form a CCHC-type zinc finger. Asp-334 (for protease activity) is an active-site residue. The 164-residue stretch at 519–682 (NSTRPLEYIY…SPFQKLFGTS (164 aa)) folds into the Integrase catalytic domain. Mg(2+) contacts are provided by Asp-530 and Asp-592. The tract at residues 772 to 927 (WSPHTTLPTR…NNNQAPLNTH (156 aa)) is disordered. 2 stretches are compositionally biased toward low complexity: residues 796-827 (AATP…SFPS) and 836-898 (QNGP…SSTS). The span at 899–912 (PTPPSILIHPPPPL) shows a compositional bias: pro residues. Over residues 915-927 (IVNNNNQAPLNTH) the composition is skewed to polar residues. The 244-residue stretch at 982–1225 (NHTWDLVPPP…ITAKPVTTPM (244 aa)) folds into the Reverse transcriptase Ty1/copia-type domain.

It carries out the reaction DNA(n) + a 2'-deoxyribonucleoside 5'-triphosphate = DNA(n+1) + diphosphate. The polypeptide is Retrovirus-related Pol polyprotein from transposon RE1 (RE1) (Arabidopsis thaliana (Mouse-ear cress)).